The following is a 443-amino-acid chain: Probable serine transporter (443 aa).

The Cytoplasmic segment spans residues 1-48 (MEIASNKGVIADASTPAGRAGMSESEWREAIKFDSTDTGWVIMSIGMA). The chain crosses the membrane as a helical span at residues 49 to 69 (IGAGIVFLPVQVGLMGLWVFL). The Periplasmic portion of the chain corresponds to 70-110 (LSSVIGYPAMYLFQRLFINTLAESPECKDYPSVISGYLGKN). The chain crosses the membrane as a helical span at residues 111–131 (WGILLGALYFVMLVIWMFVYS). Topologically, residues 132 to 149 (TAITNDSASYLHTFGVTE) are cytoplasmic. The chain crosses the membrane as a helical span at residues 150–170 (GLLSDSPFYGLVLICILVAIS). Over 171 to 182 (SRGEKLLFKIST) the chain is Periplasmic. The helical transmembrane segment at 183–203 (GMVLTKLLVVAALGVSMVGMW) threads the bilayer. Residues 204-214 (HLYNVGSLPPL) lie on the Cytoplasmic side of the membrane. A helical transmembrane segment spans residues 215–235 (GLLVKNAIITLPFTLTSILFI). The Periplasmic segment spans residues 236–264 (QTLSPMVISYRSREKSIEVARHKALRAMN). The helical transmembrane segment at 265–285 (IAFGILFVTVFFYAVSFTLAM) threads the bilayer. At 286–297 (GHDEAVKAYEQN) the chain is on the cytoplasmic side. The next 2 helical transmembrane spans lie at 298-318 (ISAL…WVKV) and 319-339 (VSVI…YLGF). Over 340 to 367 (REATQGIVMNILRRKMPAEKINENLVQR) the chain is Cytoplasmic. A helical transmembrane segment spans residues 368-388 (GIMIFAILLAWSAIVLNAPVL). Ser389 is a topological domain (periplasmic). The helical transmembrane segment at 390-410 (FTSICSPIFGMVGCLIPAWLV) threads the bilayer. The Cytoplasmic segment spans residues 411–421 (YKVPALHKYKG). Residues 422–442 (MSLYLIIVTGLLLCVSPFLAF) traverse the membrane as a helical segment. A topological domain (periplasmic) is located at residue Ser443.

This sequence belongs to the amino acid/polyamine transporter 2 family. SdaC/TdcC subfamily.

Its subcellular location is the cell inner membrane. Functionally, plays a role in L-cysteine detoxification. May transport both D- and L-serine. The chain is Probable serine transporter (dlsT) from Escherichia coli (strain K12).